A 92-amino-acid polypeptide reads, in one-letter code: MSTLKMMLLILLLLLPMATFDSDGQAIPGGGIPSAVNSRVRGDEKSGRSLEKRCRSGKTCPRVGPDECCERSDCFCKMVPARPYWRNKCICL.

The N-terminal stretch at 1-20 (MSTLKMMLLILLLLLPMATF) is a signal peptide. Positions 21–53 (DSDGQAIPGGGIPSAVNSRVRGDEKSGRSLEKR) are excised as a propeptide.

Belongs to the conotoxin N superfamily. Post-translationally, contains 4 disulfide bonds. In terms of tissue distribution, expressed by the venom duct.

The protein localises to the secreted. The chain is Conotoxin Mr15.3 from Conus marmoreus (Marble cone).